We begin with the raw amino-acid sequence, 480 residues long: MWEVIIMKTYIGKIHLKWCKNCNVPLLGRVCEVCGSKAEEVKLTPPGDPRLGFQYDMDFINKILEEEFGAKNVLNGKIILLNKIPGNEEAYEIIVDGEVKYLIYFDEDKEKWKVKLKLNGAKDLMEKGAYKKIIKIKNDVVEFLKNRKGSVLRPGIVEFTDDIEEKDDVIIVDENDRVVGVGLAVVSSEDIKNMEKGKVVKVRFFIKDNEDYKPGKIYDNLEEAFDLMVRANEGVIDNYERNAIGFIKNTYEKIKKPVMVAFSGGKDSLVTLILTLKALGKDIDVVFIDTGLEFEETLKNVEDVERHYGIKIIRLRGENFWEKVKEYGIPARDYRWCSEICKLEPLKKFIEENYEDDVLSFVGIRKYESFNRATKKRIHRNTYIKKQINALPIFHWSSLHVWIYLLREKAPYNKLYEKGFDRIGCFMCPAMEMGEMNKIKREFPKLWEKWENVLREYAEKHNLGEGWIKKGLWRWKHKRQ.

Residues 131–207 (KKIIKIKNDV…KVVKVRFFIK (77 aa)) form the PUA domain.

The protein in the C-terminal section; belongs to the PAPS reductase family.

This is an uncharacterized protein from Methanocaldococcus jannaschii (strain ATCC 43067 / DSM 2661 / JAL-1 / JCM 10045 / NBRC 100440) (Methanococcus jannaschii).